Here is a 618-residue protein sequence, read N- to C-terminus: 1-deoxy-D-xylulose-5-phosphate synthase (618 aa).

Thiamine diphosphate contacts are provided by residues His-76 and 117–119 (GHS). Asp-148 serves as a coordination point for Mg(2+). Thiamine diphosphate is bound by residues 149–150 (GA), Asn-177, Tyr-284, and Glu-364. Residue Asn-177 coordinates Mg(2+).

The protein belongs to the transketolase family. DXPS subfamily. In terms of assembly, homodimer. Requires Mg(2+) as cofactor. The cofactor is thiamine diphosphate.

The enzyme catalyses D-glyceraldehyde 3-phosphate + pyruvate + H(+) = 1-deoxy-D-xylulose 5-phosphate + CO2. It functions in the pathway metabolic intermediate biosynthesis; 1-deoxy-D-xylulose 5-phosphate biosynthesis; 1-deoxy-D-xylulose 5-phosphate from D-glyceraldehyde 3-phosphate and pyruvate: step 1/1. In terms of biological role, catalyzes the acyloin condensation reaction between C atoms 2 and 3 of pyruvate and glyceraldehyde 3-phosphate to yield 1-deoxy-D-xylulose-5-phosphate (DXP). The chain is 1-deoxy-D-xylulose-5-phosphate synthase from Francisella philomiragia subsp. philomiragia (strain ATCC 25017 / CCUG 19701 / FSC 153 / O#319-036).